Reading from the N-terminus, the 443-residue chain is Ribosomal protein uS12 methylthiotransferase RimO (443 aa).

Positions 8–118 (PKVGFVSLGC…VVNAVHEVVP (111 aa)) constitute an MTTase N-terminal domain. 6 residues coordinate [4Fe-4S] cluster: cysteine 17, cysteine 53, cysteine 82, cysteine 151, cysteine 155, and cysteine 158. Residues 137–375 (LTPRHYAYLK…MAHQQAISAA (239 aa)) form the Radical SAM core domain. The region spanning 378–443 (QLRIGKEIDV…DEYDMWAEPI (66 aa)) is the TRAM domain.

The protein belongs to the methylthiotransferase family. RimO subfamily. Requires [4Fe-4S] cluster as cofactor.

It is found in the cytoplasm. It carries out the reaction L-aspartate(89)-[ribosomal protein uS12]-hydrogen + (sulfur carrier)-SH + AH2 + 2 S-adenosyl-L-methionine = 3-methylsulfanyl-L-aspartate(89)-[ribosomal protein uS12]-hydrogen + (sulfur carrier)-H + 5'-deoxyadenosine + L-methionine + A + S-adenosyl-L-homocysteine + 2 H(+). Catalyzes the methylthiolation of an aspartic acid residue of ribosomal protein uS12. The protein is Ribosomal protein uS12 methylthiotransferase RimO of Pseudomonas putida (strain ATCC 700007 / DSM 6899 / JCM 31910 / BCRC 17059 / LMG 24140 / F1).